Here is a 711-residue protein sequence, read N- to C-terminus: Long-chain-fatty-acid--CoA ligase 4 (711 aa).

Residues 8–28 traverse the membrane as a helical; Signal-anchor for type III membrane protein segment; that stretch reads LTIVLLPVHLLITIYSALIFI. Residues 29–711 are Cytoplasmic-facing; sequence PWYFLTNAKK…KDIERMYGGK (683 aa). At serine 447 the chain carries Phosphoserine.

Belongs to the ATP-dependent AMP-binding enzyme family. It depends on Mg(2+) as a cofactor.

Its subcellular location is the mitochondrion outer membrane. It is found in the peroxisome membrane. The protein resides in the microsome membrane. It localises to the endoplasmic reticulum membrane. The protein localises to the cell membrane. The enzyme catalyses a long-chain fatty acid + ATP + CoA = a long-chain fatty acyl-CoA + AMP + diphosphate. It catalyses the reaction (5Z,8Z,11Z,14Z)-eicosatetraenoate + ATP + CoA = (5Z,8Z,11Z,14Z)-eicosatetraenoyl-CoA + AMP + diphosphate. It carries out the reaction 15-hydroxy-(5Z,8Z,11Z,13E)-eicosatetraenoate + ATP + CoA = 15-hydroxy-(5Z,8Z,11Z,13E)-eicosatetraenoyl-CoA + AMP + diphosphate. The catalysed reaction is 12-hydroxy-(5Z,8Z,10E,14Z)-eicosatetraenoate + ATP + CoA = 12-hydroxy-(5Z,8Z,10E,14Z)-eicosatetraenoyl-CoA + AMP + diphosphate. The enzyme catalyses 5-hydroxy-(6E,8Z,11Z,14Z)-eicosatetraenoate + ATP + CoA = 5-hydroxy-(6E,8Z,11Z,14Z)-eicosatetraenoyl-CoA + AMP + diphosphate. It catalyses the reaction 5,6-epoxy-(8Z,11Z,14Z)-eicosatrienoate + ATP + CoA = 5,6-epoxy-(8Z,11Z,14Z)-eicosatrienoyl-CoA + AMP + diphosphate. It carries out the reaction 14,15-epoxy-(5Z,8Z,11Z)-eicosatrienoate + ATP + CoA = 14,15-epoxy-(5Z,8Z,11Z)-eicosatrienoyl-CoA + AMP + diphosphate. The catalysed reaction is 11,12-epoxy-(5Z,8Z,14Z)-eicosatrienoate + ATP + CoA = 11,12-epoxy-(5Z,8Z,14Z)-eicosatrienoyl-CoA + AMP + diphosphate. The enzyme catalyses 8,9-epoxy-(5Z,11Z,14Z)-eicosatrienoate + ATP + CoA = 8,9-epoxy-(5Z,11Z,14Z)-eicosatrienoyl-CoA + AMP + diphosphate. It catalyses the reaction hexadecanoate + ATP + CoA = hexadecanoyl-CoA + AMP + diphosphate. It carries out the reaction (E)-hexadec-2-enoate + ATP + CoA = (2E)-hexadecenoyl-CoA + AMP + diphosphate. With respect to regulation, both triacsin C and rosiglitazone inhibit arachidonoyl-CoA ligase activity. Its function is as follows. Catalyzes the conversion of long-chain fatty acids to their active form acyl-CoA for both synthesis of cellular lipids, and degradation via beta-oxidation. Preferentially activates arachidonate and eicosapentaenoate as substrates. Preferentially activates 8,9-EET &gt; 14,15-EET &gt; 5,6-EET &gt; 11,12-EET. Modulates glucose-stimulated insulin secretion by regulating the levels of unesterified EETs. Modulates prostaglandin E2 secretion. In Rattus norvegicus (Rat), this protein is Long-chain-fatty-acid--CoA ligase 4 (Acsl4).